Reading from the N-terminus, the 438-residue chain is Glutamyl-tRNA reductase (438 aa).

Residues 49 to 52 (TCNR), serine 109, 114 to 116 (EQQ), and glutamine 120 each bind substrate. The active-site Nucleophile is cysteine 50. 191–196 (GAGAMA) is a binding site for NADP(+).

The protein belongs to the glutamyl-tRNA reductase family. In terms of assembly, homodimer.

It catalyses the reaction (S)-4-amino-5-oxopentanoate + tRNA(Glu) + NADP(+) = L-glutamyl-tRNA(Glu) + NADPH + H(+). It functions in the pathway porphyrin-containing compound metabolism; protoporphyrin-IX biosynthesis; 5-aminolevulinate from L-glutamyl-tRNA(Glu): step 1/2. Its function is as follows. Catalyzes the NADPH-dependent reduction of glutamyl-tRNA(Glu) to glutamate 1-semialdehyde (GSA). The polypeptide is Glutamyl-tRNA reductase (Corynebacterium diphtheriae (strain ATCC 700971 / NCTC 13129 / Biotype gravis)).